The primary structure comprises 93 residues: Alpha-defensin 21 (93 aa).

The N-terminal stretch at 1-19 (MKTLVLLSALILLAYQVQT) is a signal peptide. A propeptide spanning residues 20–58 (DPIQNTDEETNTEEQPGEDDQAVSVSFGGQEGSALHEKL) is cleaved from the precursor. The disordered stretch occupies residues 22-43 (IQNTDEETNTEEQPGEDDQAVS). Over residues 25-40 (TDEETNTEEQPGEDDQ) the composition is skewed to acidic residues. Disulfide bonds link C64–C89, C66–C81, and C71–C88.

Belongs to the alpha-defensin family.

Its subcellular location is the secreted. May have microbicidal activities. The polypeptide is Alpha-defensin 21 (Defa21) (Mus musculus (Mouse)).